A 295-amino-acid polypeptide reads, in one-letter code: Bifunctional protein FolD (295 aa).

Residues 163 to 165 (GRS), serine 188, and isoleucine 229 contribute to the NADP(+) site.

Belongs to the tetrahydrofolate dehydrogenase/cyclohydrolase family. Homodimer.

The enzyme catalyses (6R)-5,10-methylene-5,6,7,8-tetrahydrofolate + NADP(+) = (6R)-5,10-methenyltetrahydrofolate + NADPH. It catalyses the reaction (6R)-5,10-methenyltetrahydrofolate + H2O = (6R)-10-formyltetrahydrofolate + H(+). It participates in one-carbon metabolism; tetrahydrofolate interconversion. Functionally, catalyzes the oxidation of 5,10-methylenetetrahydrofolate to 5,10-methenyltetrahydrofolate and then the hydrolysis of 5,10-methenyltetrahydrofolate to 10-formyltetrahydrofolate. The sequence is that of Bifunctional protein FolD from Hyphomonas neptunium (strain ATCC 15444).